Reading from the N-terminus, the 40-residue chain is Natriuretic peptide PpNP-b (40 aa).

The propeptide occupies 1-8 (SGSKTANI). A disulfide bridge links Cys12 with Cys28. The disordered stretch occupies residues 20–40 (IGTTSGMGCGRPRPKPTPGGS).

Belongs to the natriuretic peptide family. Expressed by the venom gland.

The protein resides in the secreted. In terms of biological role, snake venom natriuretic peptide that targets both NPR1 and NPR2. Exhibits hypotensive and vasodepressor activities. The protein is Natriuretic peptide PpNP-b of Pseudechis porphyriacus (Red-bellied black snake).